A 156-amino-acid polypeptide reads, in one-letter code: Large ribosomal subunit protein eL24 (156 aa).

Positions 110 to 123 (RAAKEKQKQKELEK) are enriched in basic and acidic residues. Residues 110 to 156 (RAAKEKQKQKELEKKAKKVEKKKPTLAPKQKAAKITQKPAPRVGGKR) form a disordered region.

It belongs to the eukaryotic ribosomal protein eL24 family.

This chain is Large ribosomal subunit protein eL24 (RPL24), found in Schistosoma japonicum (Blood fluke).